The primary structure comprises 121 residues: MHSRLPTHAADLLQALSRLPRNAGRGLIWVYRHSFSALVGSNCRHLPTCSQYGDEAIGRFGLWAGGWMTLARLIRCNPYGTSGIDNVPETPPPGARWYLPWRYARWRGVNGPDCGCGHHDE.

The protein belongs to the UPF0161 family.

The protein localises to the cell inner membrane. Could be involved in insertion of integral membrane proteins into the membrane. The chain is Putative membrane protein insertion efficiency factor from Rhodopseudomonas palustris (strain HaA2).